Consider the following 48-residue polypeptide: Delta-actitoxin-Bcg1b (48 aa).

Disulfide bonds link cysteine 4–cysteine 45, cysteine 6–cysteine 35, and cysteine 28–cysteine 46.

Belongs to the sea anemone sodium channel inhibitory toxin family. Type I subfamily.

It localises to the secreted. The protein localises to the nematocyst. Functionally, binds to the sodium channels Nav1.1/SCN1A (EC(50)=165 nM), Nav1.5/SCN5A (EC(50)=103 nM) and Nav1.6/SCN8A (EC(50)=133 nM), thereby delaying their inactivation. Also inhibits Nav1.2/SCN2A, Nav1.3/SCN3A, and Nav1.4/SCN4A, but to a lesser extent. Inhibits Nav1.5 differently from isoforms Nav1.1 and Nav1.6. In Nav1.5 the effect consists in a right-shift of inactivation; whereas in both Nav1.1 and Nav1.6 the effect consists in an incomplete inactivation. The chain is Delta-actitoxin-Bcg1b from Bunodosoma cangicum (Sea anemone).